Here is a 92-residue protein sequence, read N- to C-terminus: Sugar fermentation stimulation protein B (92 aa).

The H-T-H motif DNA-binding region spans 50 to 69; that stretch reads EMIIAKALGTDPWVIWPSRY.

It belongs to the ner transcriptional regulatory family.

This protein is involved in positive regulation of the metabolism of sugars. The chain is Sugar fermentation stimulation protein B (sfsB) from Escherichia coli O157:H7.